Consider the following 101-residue polypeptide: YcgL domain-containing protein ACIAD2309 (101 aa).

The YcgL domain occupies 1–93; that stretch reads MHCDIYRSSK…PPEGFINPSD (93 aa).

The chain is YcgL domain-containing protein ACIAD2309 from Acinetobacter baylyi (strain ATCC 33305 / BD413 / ADP1).